The sequence spans 136 residues: Late embryogenesis abundant protein D-7 (136 aa).

Disordered regions lie at residues 1–108 (MASH…AQGA) and 117–136 (GMADADEDEHNYPATVTRKD). Residues 11–58 (GRAEGRAHEKGEQMKESMKEKAEAAKQKTMETAEAAKQKTMETAEAAK) show a composition bias toward basic and acidic residues. 5 LEA 11-mer repeat repeats span residues 31–41 (KAEAAKQKTME), 42–52 (TAEAAKQKTME), 53–63 (TAEAAKQKTRG), 64–74 (AAETTNDKTKQ), and 75–85 (TAGAARGKAEE).

This sequence belongs to the LEA type 4 family.

LEA proteins are late embryonic proteins abundant in higher plant seed embryos. There are two subsets of LEA proteins (5a and 5b), the first ones are expressed when the cotyledon weight reach 80 mg and the second set are expressed above 100 mg. The function of those proteins is not known. The protein is Late embryogenesis abundant protein D-7 of Gossypium hirsutum (Upland cotton).